The sequence spans 258 residues: Tryptophan synthase alpha chain (258 aa).

Residues E47 and D58 each act as proton acceptor in the active site.

It belongs to the TrpA family. In terms of assembly, tetramer of two alpha and two beta chains.

The catalysed reaction is (1S,2R)-1-C-(indol-3-yl)glycerol 3-phosphate + L-serine = D-glyceraldehyde 3-phosphate + L-tryptophan + H2O. Its pathway is amino-acid biosynthesis; L-tryptophan biosynthesis; L-tryptophan from chorismate: step 5/5. The alpha subunit is responsible for the aldol cleavage of indoleglycerol phosphate to indole and glyceraldehyde 3-phosphate. This chain is Tryptophan synthase alpha chain, found in Bacillus thuringiensis (strain Al Hakam).